A 345-amino-acid polypeptide reads, in one-letter code: Cytoskeleton protein RodZ (345 aa).

Over 1–111 (MNTEASQDQT…LGKKHKKRDG (111 aa)) the chain is Cytoplasmic. Positions 19–79 (LRQARESLGL…KLVHLPEDEL (61 aa)) constitute an HTH cro/C1-type domain. The segment at residues 30-49 (QQTVAERLCLKVSTIRDIEE) is a DNA-binding region (H-T-H motif). The helical; Signal-anchor for type II membrane protein transmembrane segment at 112 to 132 (WLMSFTWLIVLVVLGLTGAWW) threads the bilayer. At 133–345 (WQNHQAQQAE…RVARLTVGVE (213 aa)) the chain is on the periplasmic side. The disordered stretch occupies residues 151 to 260 (SAQLSQNGGQ…LPTADAGVSG (110 aa)). Residues 188–225 (PLTNHSGSAITNSATTSSVPKTTSTEPVDTANTNTTMH) show a composition bias toward polar residues. The span at 229–241 (AASAAVSPSQVPQ) shows a compositional bias: low complexity.

Belongs to the RodZ family.

The protein resides in the cell inner membrane. Its function is as follows. Cytoskeletal protein that is involved in cell-shape control through regulation of the length of the long axis. The polypeptide is Cytoskeleton protein RodZ (Yersinia pestis (strain Pestoides F)).